The primary structure comprises 392 residues: Lipid-A-disaccharide synthase (392 aa).

Belongs to the LpxB family.

It carries out the reaction a lipid X + a UDP-2-N,3-O-bis[(3R)-3-hydroxyacyl]-alpha-D-glucosamine = a lipid A disaccharide + UDP + H(+). Its pathway is bacterial outer membrane biogenesis; LPS lipid A biosynthesis. Functionally, condensation of UDP-2,3-diacylglucosamine and 2,3-diacylglucosamine-1-phosphate to form lipid A disaccharide, a precursor of lipid A, a phosphorylated glycolipid that anchors the lipopolysaccharide to the outer membrane of the cell. In Syntrophotalea carbinolica (strain DSM 2380 / NBRC 103641 / GraBd1) (Pelobacter carbinolicus), this protein is Lipid-A-disaccharide synthase.